Here is a 293-residue protein sequence, read N- to C-terminus: MMRISLFLLTNLAVMVVFGIVLSLTGIQSSSAAGLMIMAGLFGFGGAFVSLLMSKSMALRSVGGEVIEQPRNETERWLLNTVRQQAQQANITMPQVALYHAPDINAFATGARRDASLVAVSTGLLQNMNRDEAEAVIAHEISHIANGDMVTMTLIQGVVNTFVIFISRILAQLAAGFMSSGRDEGESGNGNPLVYFAVSMVLELVFGVLASIITLWFSRHREFHADAGSARLVGREKMIAALQRLKTSYEPQEASSMMAFCINGRNKTFSELFMSHPPLDKRIEALRSGAYLQ.

The next 2 membrane-spanning stretches (helical) occupy residues 4–24 (ISLF…VLSL) and 33–53 (AGLM…SLLM). A Zn(2+)-binding site is contributed by H139. E140 is an active-site residue. Residue H143 coordinates Zn(2+). Transmembrane regions (helical) follow at residues 158–178 (VVNT…AGFM) and 193–213 (LVYF…ASII). E222 contacts Zn(2+).

Belongs to the peptidase M48B family. Requires Zn(2+) as cofactor.

It localises to the cell inner membrane. In Sodalis glossinidius (strain morsitans), this protein is Protease HtpX.